A 419-amino-acid chain; its full sequence is Haloacid dehalogenase-like hydrolase domain-containing 5 (419 aa).

The signal sequence occupies residues 1-15 (MAALAGLGVLGAGRH).

This sequence belongs to the HAD-like hydrolase superfamily.

The polypeptide is Haloacid dehalogenase-like hydrolase domain-containing 5 (Mus musculus (Mouse)).